Consider the following 452-residue polypeptide: BUB3-interacting and GLEBS motif-containing protein ZNF207 (452 aa).

The interval 1-92 (MGRKKKKQLK…EGIPEKDMEE (92 aa)) is microtubule-binding region. C2H2-type zinc fingers lie at residues 11-34 (PWCWYCNRDFDDEKILIQHQKAKH) and 35-58 (FKCHICHKKLYTGPGLAIHCMQVH). 2 disordered regions span residues 99 to 131 (QKTQVDGQKKKTNQDDSDYDDDDDTAPSTSFQQ) and 298 to 330 (STMSTTSTTNSTASKPSTSITSKPATLTTTSAT). Over residues 113-123 (DDSDYDDDDDT) the composition is skewed to acidic residues. Positions 329–361 (ATSKLVHPDEDISLEEKRAQLPKYQRNLPRPGQ) are GLEBS.

As to quaternary structure, interacts (via GLEBS region) with bub3.

Its subcellular location is the nucleus. It is found in the chromosome. The protein resides in the centromere. The protein localises to the kinetochore. It localises to the cytoplasm. Its subcellular location is the cytoskeleton. It is found in the spindle. Functionally, kinetochore- and microtubule-binding protein that plays a key role in spindle assembly. Znf207/BuGZ is mainly composed of disordered low-complexity regions and undergoes phase transition or coacervation to form temperature-dependent liquid droplets. Coacervation promotes microtubule bundling and concentrates tubulin, promoting microtubule polymerization and assembly of spindle and spindle matrix by concentrating its building blocks. This Xenopus laevis (African clawed frog) protein is BUB3-interacting and GLEBS motif-containing protein ZNF207.